The sequence spans 127 residues: Large ribosomal subunit protein eL18 (127 aa).

The protein belongs to the eukaryotic ribosomal protein eL18 family.

The sequence is that of Large ribosomal subunit protein eL18 from Methanopyrus kandleri (strain AV19 / DSM 6324 / JCM 9639 / NBRC 100938).